Reading from the N-terminus, the 153-residue chain is Putative adenylate kinase (153 aa).

ATP contacts are provided by glycine 12, glycine 14, lysine 15, serine 16, and threonine 17. The NMP stretch occupies residues 31–47 (EGNELAKEYGCLFDEEV). The interval 94 to 104 (ARGYSEEKIQE) is LID. Arginine 95 lines the ATP pocket.

The protein belongs to the adenylate kinase family. AK6 subfamily. Interacts with uS11. Not a structural component of 40S pre-ribosomes, but transiently interacts with them by binding to uS11.

The enzyme catalyses AMP + ATP = 2 ADP. It carries out the reaction ATP + H2O = ADP + phosphate + H(+). Its function is as follows. Broad-specificity nucleoside monophosphate (NMP) kinase that catalyzes the reversible transfer of the terminal phosphate group between nucleoside triphosphates and monophosphates. Also has ATPase activity. Involved in the late maturation steps of the 30S ribosomal particles, specifically 16S rRNA maturation. While NMP activity is not required for ribosome maturation, ATPase activity is. Associates transiently with small ribosomal subunit protein uS11. ATP hydrolysis breaks the interaction with uS11. May temporarily remove uS11 from the ribosome to enable a conformational change of the ribosomal RNA that is needed for the final maturation step of the small ribosomal subunit. This chain is Putative adenylate kinase, found in Thermoplasma volcanium (strain ATCC 51530 / DSM 4299 / JCM 9571 / NBRC 15438 / GSS1).